Consider the following 384-residue polypeptide: Lipoprotein LprN (384 aa).

A signal peptide spans 1–20; that stretch reads MNRIWLRAIILTASSALLAG. C21 carries the N-palmitoyl cysteine lipid modification. C21 is lipidated: S-diacylglycerol cysteine.

Post-translationally, lipidated upon expression in E.coli.

Its subcellular location is the cell membrane. Its function is as follows. Stimulates the host (mouse) immune response; lipidated protein produced in E.coli stimulates T-cell proliferation in mice previously sensitized with LprN. Spleenocytes from these mice produce increased amounts of TNF-alpha and IFN-gamma, as well as somewhat increased nitric oxide levels, upon subsequent challenge with LprN. Previously sensitized mice infected with M.tuberculosis have an exacerbated disease response, suggesting this lipoprotein may down-regulate the host's immune response. This Mycobacterium tuberculosis (strain ATCC 25618 / H37Rv) protein is Lipoprotein LprN (lprN).